A 271-amino-acid chain; its full sequence is Co-chaperone protein DjlA (271 aa).

Residues 1-6 (MQYWGK) are Periplasmic-facing. The helical transmembrane segment at 7–31 (IIGVAVALIMGGGFWGVVLGLLIGH) threads the bilayer. At 32–271 (MFDKARSRKM…ELIKQQKGFK (240 aa)) the chain is on the cytoplasmic side. In terms of domain architecture, J spans 205–271 (DACNVLGVKP…ELIKQQKGFK (67 aa)).

Homodimer.

The protein resides in the cell inner membrane. In terms of biological role, regulatory DnaK co-chaperone. Direct interaction between DnaK and DjlA is needed for the induction of the wcaABCDE operon, involved in the synthesis of a colanic acid polysaccharide capsule, possibly through activation of the RcsB/RcsC phosphotransfer signaling pathway. The colanic acid capsule may help the bacterium survive conditions outside the host. The protein is Co-chaperone protein DjlA of Escherichia coli O6:H1 (strain CFT073 / ATCC 700928 / UPEC).